The following is a 183-amino-acid chain: ATP-dependent protease subunit HslV (183 aa).

T9 is an active-site residue. The Na(+) site is built by A164, C167, and T170.

Belongs to the peptidase T1B family. HslV subfamily. As to quaternary structure, a double ring-shaped homohexamer of HslV is capped on each side by a ring-shaped HslU homohexamer. The assembly of the HslU/HslV complex is dependent on binding of ATP.

Its subcellular location is the cytoplasm. The catalysed reaction is ATP-dependent cleavage of peptide bonds with broad specificity.. Its activity is regulated as follows. Allosterically activated by HslU binding. In terms of biological role, protease subunit of a proteasome-like degradation complex believed to be a general protein degrading machinery. The sequence is that of ATP-dependent protease subunit HslV from Hydrogenovibrio crunogenus (strain DSM 25203 / XCL-2) (Thiomicrospira crunogena).